A 254-amino-acid chain; its full sequence is Tabinhibitin 6 (254 aa).

The signal sequence occupies residues 1 to 22 (MLPYWCPLLLAALVLQYATIDA). Positions 31–33 (RGD) match the Cell attachment site motif. The region spanning 66 to 210 (LSKINDVRDH…KARALLTCNF (145 aa)) is the SCP domain.

The protein belongs to the CRISP family. Expressed in salivary glands.

The protein localises to the secreted. Functionally, inhibits platelet aggregation induced by all agonists tested (ADP, arachidonic acid, the thromboxane A2 analog U46619, thrombin, and snake venom snaclecs (TMVA that activates platelet through GPIB, and stejnulxin that specifically acts through GPVI (GP6))). May act by competing with fibrinogen for binding to glycoprotein IIb/IIIa (ITGA2B/ITGB3). This chain is Tabinhibitin 6, found in Tabanus yao (Horsefly).